A 143-amino-acid polypeptide reads, in one-letter code: Large ribosomal subunit protein uL13 (143 aa).

It belongs to the universal ribosomal protein uL13 family. Part of the 50S ribosomal subunit.

Functionally, this protein is one of the early assembly proteins of the 50S ribosomal subunit, although it is not seen to bind rRNA by itself. It is important during the early stages of 50S assembly. In Variovorax paradoxus (strain S110), this protein is Large ribosomal subunit protein uL13.